The sequence spans 223 residues: Ribosomal RNA small subunit methyltransferase G (223 aa).

Residues G85, F90, and R154 each coordinate S-adenosyl-L-methionine.

The protein belongs to the methyltransferase superfamily. RNA methyltransferase RsmG family.

The protein localises to the cytoplasm. It catalyses the reaction guanosine(527) in 16S rRNA + S-adenosyl-L-methionine = N(7)-methylguanosine(527) in 16S rRNA + S-adenosyl-L-homocysteine. Its function is as follows. Specifically methylates the N7 position of guanine in position 527 of 16S rRNA. This chain is Ribosomal RNA small subunit methyltransferase G, found in Rhodopseudomonas palustris (strain TIE-1).